The sequence spans 218 residues: uncharacterized protein (218 aa).

Residues 2–216 (IEVLNLTKKI…ETSEKVIYKK (215 aa)) form the ABC transporter domain. ATP is bound at residue 34–41 (GSNGSGKT).

This sequence belongs to the ABC transporter superfamily.

This is an uncharacterized protein from Bacillus subtilis (strain 168).